Here is a 34-residue protein sequence, read N- to C-terminus: Cytochrome b6-f complex subunit 7 (34 aa).

The helical transmembrane segment at 9–29 threads the bilayer; sequence ALLSFGLIFVGWALGALLLKI.

This sequence belongs to the PetM family. As to quaternary structure, the 4 large subunits of the cytochrome b6-f complex are cytochrome b6, subunit IV (17 kDa polypeptide, PetD), cytochrome f and the Rieske protein, while the 4 small subunits are PetG, PetL, PetM and PetN. The complex functions as a dimer.

It localises to the cellular thylakoid membrane. In terms of biological role, component of the cytochrome b6-f complex, which mediates electron transfer between photosystem II (PSII) and photosystem I (PSI), cyclic electron flow around PSI, and state transitions. This Nostoc sp. (strain PCC 7120 / SAG 25.82 / UTEX 2576) protein is Cytochrome b6-f complex subunit 7.